The following is a 65-amino-acid chain: Large ribosomal subunit protein bL33m (65 aa).

Residues 1 to 8 (MLLSAVSF) constitute a mitochondrion transit peptide.

Belongs to the bacterial ribosomal protein bL33 family. As to quaternary structure, component of the mitochondrial ribosome large subunit (39S) which comprises a 16S rRNA and about 50 distinct proteins.

The protein localises to the mitochondrion. The polypeptide is Large ribosomal subunit protein bL33m (Mrpl33) (Mus musculus (Mouse)).